A 459-amino-acid chain; its full sequence is Protein king tubby (459 aa).

A disordered region spans residues His-114–Gly-205. The segment covering Pro-123–Asp-155 has biased composition (polar residues). Ser-152 bears the Phosphoserine mark.

Belongs to the TUB family.

It is found in the cytoplasm. The protein resides in the nucleus. The protein localises to the cell projection. It localises to the cilium membrane. Its subcellular location is the rhabdomere. The polypeptide is Protein king tubby (Drosophila persimilis (Fruit fly)).